An 80-amino-acid polypeptide reads, in one-letter code: Kappa-actitoxin-Avd4f (80 aa).

A signal peptide spans 1 to 19 (MNKALFLCLVVLCAAVVFA). Positions 20 to 31 (AEDLQKAKHAPF) are excised as a propeptide. 3 disulfide bridges follow: Cys-41–Cys-76, Cys-43–Cys-69, and Cys-59–Cys-77.

The protein belongs to the sea anemone type 3 (BDS) potassium channel toxin family. Moderately expressed in the ectodermal tissue from the distal and proximal tentacles, body wall, and oral disk.

The protein resides in the secreted. It is found in the nematocyst. Functionally, blocks Kv3 voltage-gated potassium channels. Reduces blood pressure. This Anemonia viridis (Snakelocks anemone) protein is Kappa-actitoxin-Avd4f.